The sequence spans 684 residues: Phenoloxidase 1 (684 aa).

Positions 1–50 are cleaved as a propeptide — removed by PPAF1; the sequence is MSDKNKLLLLFDRPLETVIVPRGPDQEAFDVPVDLLSDRYKAIGVQVSNR. N-linked (GlcNAc...) asparagine glycosylation occurs at N80. Cu cation-binding residues include H208, H212, and H237. E349 acts as the Proton acceptor in catalysis. N-linked (GlcNAc...) asparagine glycans are attached at residues N352 and N356. The Cu cation site is built by H364, H368, and H404. N-linked (GlcNAc...) asparagine glycosylation is found at N486, N491, and N545. Intrachain disulfides connect C579/C621 and C581/C628.

The protein belongs to the tyrosinase family. Dimer. Might form a homodimer or a heterodimer with PPO1. Might interact with PPAF2 (via CLIP domain); the interaction might be required for PPO1 activity. Requires Cu(2+) as cofactor. Post-translationally, propeptide cleaved by PPAF1. In terms of tissue distribution, hemocytes.

The protein localises to the secreted. Functionally, this is a copper-containing oxidase that functions in the formation of pigments such as melanins and other polyphenolic compounds. Catalyzes the oxidation of o-diphenols (N-acetyldopamine, 4-methylcatechol and dopamine). Cannot oxidize monophenols and p-phenols (L-tyrosine, tyramine, gentisic acid and hydroquinone). Binds to the surface of hemocytes and is involved in hemocyte melanization. Activation of the enzyme in response to bacterial lipopolysaccharides (LPS) suggests it may play a role in innate immunity. The protein is Phenoloxidase 1 of Holotrichia diomphalia (Korean black chafer).